The chain runs to 395 residues: S-adenosylmethionine synthase (395 aa).

Residue histidine 16 participates in ATP binding. Aspartate 18 contacts Mg(2+). Glutamate 44 serves as a coordination point for K(+). 2 residues coordinate L-methionine: glutamate 57 and glutamine 100. Positions glutamine 100–arginine 110 are flexible loop. ATP contacts are provided by residues aspartate 167 to lysine 169, arginine 233 to phenylalanine 234, aspartate 242, arginine 248 to lysine 249, alanine 265, and lysine 269. Aspartate 242 is an L-methionine binding site. Residue lysine 273 participates in L-methionine binding.

The protein belongs to the AdoMet synthase family. As to quaternary structure, homotetramer; dimer of dimers. The cofactor is Mg(2+). It depends on K(+) as a cofactor.

The protein localises to the cytoplasm. The catalysed reaction is L-methionine + ATP + H2O = S-adenosyl-L-methionine + phosphate + diphosphate. Its pathway is amino-acid biosynthesis; S-adenosyl-L-methionine biosynthesis; S-adenosyl-L-methionine from L-methionine: step 1/1. In terms of biological role, catalyzes the formation of S-adenosylmethionine (AdoMet) from methionine and ATP. The overall synthetic reaction is composed of two sequential steps, AdoMet formation and the subsequent tripolyphosphate hydrolysis which occurs prior to release of AdoMet from the enzyme. This is S-adenosylmethionine synthase from Burkholderia cenocepacia (strain HI2424).